Here is a 300-residue protein sequence, read N- to C-terminus: uncharacterized protein (300 aa).

Residue Tyr-53 is the Proton donor of the active site. 210 to 220 is a binding site for NADP(+); the sequence is SPLAGGKVFTE.

This sequence belongs to the aldo/keto reductase family. Aldo/keto reductase 2 subfamily.

This is an uncharacterized protein from Bacillus subtilis (strain 168).